The following is a 408-amino-acid chain: Probable medium-chain specific acyl-CoA dehydrogenase 2, mitochondrial (408 aa).

Residues 1–5 constitute a mitochondrion transit peptide; sequence MLSRL. Residues 143 to 152 and 176 to 178 contribute to the FAD site; these read YCVTEPGAGS and WIT. Serine 152 is a substrate binding site. 263–266 lines the substrate pocket; sequence DMTR. FAD-binding positions include 291–293, 301–302, and 355–359; these read RKA, HQ, and MLFRC. The Proton acceptor role is filled by glutamate 382. Glycine 383 serves as a coordination point for substrate. FAD is bound at residue 384–386; that stretch reads TSQ. Arginine 394 is a substrate binding site.

This sequence belongs to the acyl-CoA dehydrogenase family. Homotetramer. FAD is required as a cofactor.

It is found in the mitochondrion matrix. The enzyme catalyses a medium-chain 2,3-saturated fatty acyl-CoA + oxidized [electron-transfer flavoprotein] + H(+) = a medium-chain (2E)-enoyl-CoA + reduced [electron-transfer flavoprotein]. Its pathway is lipid metabolism; mitochondrial fatty acid beta-oxidation. Its function is as follows. This enzyme is specific for acyl chain lengths of 4 to 16. This Caenorhabditis briggsae protein is Probable medium-chain specific acyl-CoA dehydrogenase 2, mitochondrial.